Consider the following 382-residue polypeptide: Low-specificity L-threonine aldolase (382 aa).

K214 is subject to N6-(pyridoxal phosphate)lysine.

The protein belongs to the threonine aldolase family. In terms of assembly, homotetramer. Pyridoxal 5'-phosphate is required as a cofactor.

The catalysed reaction is L-threonine = acetaldehyde + glycine. It catalyses the reaction L-allo-threonine = acetaldehyde + glycine. It participates in amino-acid degradation; L-threonine degradation via aldolase pathway; acetaldehyde and glycine from L-threonine: step 1/1. The sequence is that of Low-specificity L-threonine aldolase (GLY1) from Eremothecium gossypii (strain ATCC 10895 / CBS 109.51 / FGSC 9923 / NRRL Y-1056) (Yeast).